Here is a 363-residue protein sequence, read N- to C-terminus: MSASSILDLVREDLRAFAGYSSARTSALQGDVWLNANESAWANPADPDASTRRYPDPQPKGLRSALAALYGCAPEQLLIGRGSDEAIDLLVRGLCVPERDAVLVTPPVFGMYAVCARLQNAPLVDVPLVDGPDGFHADIPAIVAMALSSNAKLVFLCSPSNPAGSAIALDQIEQALQALQGKALVVVDEAYGEFSDVPSAVGLLGRYDNLAVLRTLSKAHALAAARIGTLIANAELIALLRRCQAPYPVPTPCAAMAEQALSAPALEVTRRRIAEVRSERERMHKALVQLPGVRQVYPSQGNFLLVRFDDAEGAFQALLEAGVVVRDQRAVPRLADALRITLGTNEQNQRVLSALQRTQEAAA.

Lys-218 is subject to N6-(pyridoxal phosphate)lysine.

The protein belongs to the class-II pyridoxal-phosphate-dependent aminotransferase family. Histidinol-phosphate aminotransferase subfamily. In terms of assembly, homodimer. It depends on pyridoxal 5'-phosphate as a cofactor.

It catalyses the reaction L-histidinol phosphate + 2-oxoglutarate = 3-(imidazol-4-yl)-2-oxopropyl phosphate + L-glutamate. It functions in the pathway amino-acid biosynthesis; L-histidine biosynthesis; L-histidine from 5-phospho-alpha-D-ribose 1-diphosphate: step 7/9. The chain is Histidinol-phosphate aminotransferase from Xanthomonas axonopodis pv. citri (strain 306).